The sequence spans 551 residues: Cytochrome P450 monooxygenase FCK2 (551 aa).

Helical transmembrane passes span 8-28 (FDPANYSLFFVLGVLTHVFIF), 35-55 (LHVFNILQAFAVLESSLVYIV), and 69-89 (VTTISSCFTLSTLMGLLISIL). The N-linked (GlcNAc...) asparagine glycan is linked to asparagine 258. Cysteine 493 serves as a coordination point for heme.

This sequence belongs to the cytochrome P450 family. The cofactor is heme.

It localises to the membrane. Its pathway is secondary metabolite biosynthesis. Functionally, cytochrome P450 monooxygenase; part of the gene cluster that mediates the biosynthesis of cytokinins such as fusatin, fusatinic acids or 8-oxofusatin, known for their growth promoting and anti-senescence activities toward host plants. FCK1 is a bifunctional enzyme that performs the first steps in the biosynthesis of Fusarium cytokinins. It first condenses adenosine monophosphate (AMP) with dimethylallyl diphosphate (DMAPP) to yield isoprenyl adenosine monophosphate. It then catalyzes the removal of the phosphoribose to produce isopentenylaldehyde. The cytochrome P450 monooxygenase then converts isopentenylaldehyde to trans-zeatin. A condensation step converts trans-zeatin to fusatin which is further modified to produce fusatinic acid. The mechanism for oxidation of fusatin to fusatinic acid remains unknown. 8-oxofusatin could be produced through several pathways, via direct oxygenation of fusatin, or via the 8-oxo-pentenyladenine intermediate which itself must arise from either the prenylation of 8-oxo-AMP by FCK1 and/or oxygenation of isopentenylaldehyde. Both the FCK3 and FCK4 enzymes act downstream of the identified cytokinins to produce yet unidentified compounds. This is Cytochrome P450 monooxygenase FCK2 from Fusarium pseudograminearum (strain CS3096) (Wheat and barley crown-rot fungus).